We begin with the raw amino-acid sequence, 83 residues long: Mu-theraphotoxin-Hhn2b 2 (83 aa).

The signal sequence occupies residues 1-21; the sequence is MKASMFLALAGLVLLFVVCYA. The propeptide occupies 22–48; it reads SESEEKEFPRELISKIFTVDDFKGEER. Cystine bridges form between cysteine 50–cysteine 65, cysteine 57–cysteine 70, and cysteine 64–cysteine 77. Leucine 81 carries the post-translational modification Leucine amide.

Belongs to the neurotoxin 10 (Hwtx-1) family. 14 (Hntx-1) subfamily. In terms of assembly, monomer. In terms of tissue distribution, expressed by the venom gland.

Its subcellular location is the secreted. In terms of biological role, weakly blocks the rat SCN2A/SCN1B (Nav1.2/beta-1) sodium channel (IC(50)=68 uM) and the insect sodium channel para/tipE (IC(50)=4.3 uM), without altering the activation or inactivation kinetics (depressant toxin). The sequence is that of Mu-theraphotoxin-Hhn2b 2 from Cyriopagopus hainanus (Chinese bird spider).